The sequence spans 340 residues: Beta-ketoacyl-[acyl-carrier-protein] synthase III (340 aa).

Residues C122 and H260 contribute to the active site. Positions 261 to 265 are ACP-binding; the sequence is QANTR. N291 is a catalytic residue.

Belongs to the thiolase-like superfamily. FabH family. Homodimer.

It is found in the cytoplasm. It carries out the reaction malonyl-[ACP] + acetyl-CoA + H(+) = 3-oxobutanoyl-[ACP] + CO2 + CoA. The protein operates within lipid metabolism; fatty acid biosynthesis. In terms of biological role, catalyzes the condensation reaction of fatty acid synthesis by the addition to an acyl acceptor of two carbons from malonyl-ACP. Catalyzes the first condensation reaction which initiates fatty acid synthesis and may therefore play a role in governing the total rate of fatty acid production. Possesses both acetoacetyl-ACP synthase and acetyl transacylase activities. Its substrate specificity determines the biosynthesis of branched-chain and/or straight-chain of fatty acids. In Mycobacteroides abscessus (strain ATCC 19977 / DSM 44196 / CCUG 20993 / CIP 104536 / JCM 13569 / NCTC 13031 / TMC 1543 / L948) (Mycobacterium abscessus), this protein is Beta-ketoacyl-[acyl-carrier-protein] synthase III.